We begin with the raw amino-acid sequence, 351 residues long: Hepatocyte nuclear factor 3-gamma (351 aa).

Residues 52–73 are compositionally biased toward pro residues; sequence PGGLPASPLPTGPLAPPAPTAP. Residues 52-94 form a disordered region; sequence PGGLPASPLPTGPLAPPAPTAPLGPTFPGLGASTGGGSSSGYG. Residues 83–94 are compositionally biased toward gly residues; sequence ASTGGGSSSGYG. The segment at residues 118 to 212 is a DNA-binding region (fork-head); sequence KPPYSYISLI…ENGCYLRRQK (95 aa). Residues 218-275 form a disordered region; it reads EKVKKGGGGSSASRNSAGSASTATAPAATVASTPQPQPPPPEPEAQGGDEVGALDCGS. Over residues 228–251 the composition is skewed to low complexity; sequence SASRNSAGSASTATAPAATVASTP.

It is found in the nucleus. Transcription activator for a number of liver genes such as AFP, albumin, tyrosine aminotransferase, PEPCK, etc. Interacts with the cis-acting regulatory regions of these genes. The chain is Hepatocyte nuclear factor 3-gamma (FOXA3) from Bos taurus (Bovine).